The chain runs to 86 residues: DNA-directed RNA polymerase subunit omega (86 aa).

Residues 67-76 (SAREHAKESQ) show a composition bias toward basic and acidic residues. The disordered stretch occupies residues 67–86 (SAREHAKESQVSEEEVREES). Over residues 77–86 (VSEEEVREES) the composition is skewed to acidic residues.

Belongs to the RNA polymerase subunit omega family. In terms of assembly, the RNAP catalytic core consists of 2 alpha, 1 beta, 1 beta' and 1 omega subunit. When a sigma factor is associated with the core the holoenzyme is formed, which can initiate transcription.

The enzyme catalyses RNA(n) + a ribonucleoside 5'-triphosphate = RNA(n+1) + diphosphate. Its function is as follows. Promotes RNA polymerase assembly. Latches the N- and C-terminal regions of the beta' subunit thereby facilitating its interaction with the beta and alpha subunits. The protein is DNA-directed RNA polymerase subunit omega of Nitrosococcus oceani (strain ATCC 19707 / BCRC 17464 / JCM 30415 / NCIMB 11848 / C-107).